The primary structure comprises 230 residues: L-aspartate/glutamate-specific racemase (230 aa).

Residues Met10, Gln52, and 83–85 (TNT) each bind substrate. The active-site Proton donor is Thr83. Cys197 (proton acceptor) is an active-site residue. Residue 198-199 (TE) coordinates substrate.

Belongs to the aspartate/glutamate racemases family. As to quaternary structure, homodimer.

It catalyses the reaction L-glutamate = D-glutamate. The enzyme catalyses L-aspartate = D-aspartate. Exhibits racemase activity for both L-glutamate and L-aspartate. In Escherichia coli O157:H7, this protein is L-aspartate/glutamate-specific racemase.